We begin with the raw amino-acid sequence, 103 residues long: Secreted Ly-6/uPAR-related protein 1 (103 aa).

The N-terminal stretch at 1–22 is a signal peptide; the sequence is MASRWAVQLLLVAAWSMGCGEA. The UPAR/Ly6 domain occupies 24-73; sequence KCYTCKEPMTSASCRTITRCKPEDTACMTTLVTVEAEYPFNQSPVVTRSC. 5 cysteine pairs are disulfide-bonded: Cys-25–Cys-50, Cys-28–Cys-37, Cys-43–Cys-73, Cys-77–Cys-93, and Cys-94–Cys-99.

In terms of assembly, homodimer. Interacts with PLAU. Interacts with CHRNA7. In terms of tissue distribution, granulocytes. Expressed in skin. Predominantly expressed in the granular layer of skin, notably the acrosyringium. Identified in several biological fluids such as sweat, saliva, tears, plasma and urine.

It is found in the secreted. Has an antitumor activity. Was found to be a marker of late differentiation of the skin. Implicated in maintaining the physiological and structural integrity of the keratinocyte layers of the skin. In vitro down-regulates keratinocyte proliferation; the function may involve the proposed role as modulator of nicotinic acetylcholine receptors (nAChRs) activity. In vitro inhibits alpha-7-dependent nAChR currents in an allosteric manner. In T cells may be involved in regulation of intracellular Ca(2+) signaling. Seems to have an immunomodulatory function in the cornea. The function may implicate a possible role as a scavenger receptor for PLAU thereby blocking PLAU-dependent functions of PLAUR such as in cell migration and proliferation. The polypeptide is Secreted Ly-6/uPAR-related protein 1 (SLURP1) (Homo sapiens (Human)).